Here is a 526-residue protein sequence, read N- to C-terminus: Secreted triacylglycerol lipase LIP4 (526 aa).

An N-terminal signal peptide occupies residues 1–26 (MVRLSYVRFGVAWCIAIIIVSGFSNA). N-linked (GlcNAc...) asparagine glycosylation is present at Asn186. Catalysis depends on Ser195, which acts as the Nucleophile. A glycan (N-linked (GlcNAc...) asparagine) is linked at Asn228. Residues Asp342 and His376 contribute to the active site. Asn377 carries an N-linked (GlcNAc...) asparagine glycan. The segment at 412–526 (TGPSASSSAG…TMPAPPLMER (115 aa)) is disordered. Low complexity-rich tracts occupy residues 413 to 423 (GPSASSSAGGP) and 430 to 457 (TGGHHTQSGSAHGGHSSEHAASSTHAPA). Asn462 carries an N-linked (GlcNAc...) asparagine glycan. Residues 480 to 490 (PSTGATSPAPS) show a composition bias toward low complexity. Residues 516–526 (RTMPAPPLMER) are compositionally biased toward pro residues.

It belongs to the AB hydrolase superfamily. Lipase family. Class Lip subfamily.

The protein localises to the secreted. It carries out the reaction a triacylglycerol + H2O = a diacylglycerol + a fatty acid + H(+). It catalyses the reaction a monoacylglycerol + H2O = glycerol + a fatty acid + H(+). The enzyme catalyses a diacylglycerol + H2O = a monoacylglycerol + a fatty acid + H(+). Functionally, secreted lipase that hydrolyzes acylglycerol lipids such as triacylglycerols and consequently releases free fatty acid. Can hydrolyze 4-nitrophenyl palmitate to release 4-nitrophenol and palmitoic acid. Due to an absence of fatty acid synthase genes in Malassezia species, secretory lipases are essential for the yeast to generate free fatty acids from degradation of sebum and assimilate them as lipid sources for growth. Plays important roles not only in lipid metabolism but also in the immune response of host cells and pathogenesis. The sequence is that of Secreted triacylglycerol lipase LIP4 from Malassezia furfur (Pityriasis versicolor infection agent).